The primary structure comprises 2183 residues: Genome polyprotein (2183 aa).

The N-myristoyl glycine; by host moiety is linked to residue G2. At 2-1493 (GAQVSTQKTG…HVSRAFICLQ (1492 aa)) the chain is on the cytoplasmic side. Positions 566-582 (FYQGPTEESVERAMGRV) are amphipathic alpha-helix. Residues H870 and D888 each act as for protease 2A activity in the active site. Residues C905 and C907 each coordinate Zn(2+). The For protease 2A activity role is filled by C959. Positions 965 and 967 each coordinate Zn(2+). The interval 1099-1171 (NNNWLKKFTE…EQSAPSQSDQ (73 aa)) is membrane-binding. Residues 1099 to 1237 (NNNWLKKFTE…SPGAGKSVAT (139 aa)) form an oligomerization region. The RNA-binding stretch occupies residues 1120-1124 (AVKIQ). An SF3 helicase domain is found at 1203 to 1359 (EKKMSNYIQF…SMYSQNGKIN (157 aa)). Zn(2+)-binding residues include C1367, C1379, and C1384. The C4-type; degenerate zinc-finger motif lies at 1367–1384 (CDEECCPVNFKKCCPLVC). An RNA-binding region spans residues 1411–1418 (EYNHRHSV). The tract at residues 1422–1427 (LEALFQ) is oligomerization. Residues 1494 to 1509 (ALTTFVSVAGIIYIIY) lie within the membrane without spanning it. Residues 1510–2183 (KLFAGFQGAY…TLRRKWLDAF (674 aa)) are Cytoplasmic-facing. Y1519 bears the O-(5'-phospho-RNA)-tyrosine mark. Positions 1539-1717 (GPAFEFAVAM…FSASLLRHYF (179 aa)) constitute a Peptidase C3 domain. Active-site for protease 3C activity residues include H1578, E1609, and C1685. Residues 1948–2064 (GHLRAFDYSG…SYPLPIDASL (117 aa)) form the RdRp catalytic domain. D1954 and D2050 together coordinate Mg(2+).

The protein belongs to the picornaviruses polyprotein family. Interacts with capsid protein VP1 and capsid protein VP3 to form heterotrimeric protomers. As to quaternary structure, interacts with capsid protein VP0, and capsid protein VP3 to form heterotrimeric protomers. Five protomers subsequently associate to form pentamers which serve as building blocks for the capsid. Interacts with capsid protein VP2, capsid protein VP3 and capsid protein VP4 following cleavage of capsid protein VP0. Interacts with host CXADR. In terms of assembly, interacts with capsid protein VP1 and capsid protein VP3 in the mature capsid. Interacts with capsid protein VP0 and capsid protein VP1 to form heterotrimeric protomers. Five protomers subsequently associate to form pentamers which serve as building blocks for the capsid. Interacts with capsid protein VP4 in the mature capsid. Interacts with protein 2C; this interaction may be important for virion morphogenesis. As to quaternary structure, interacts with capsid protein VP1 and capsid protein VP3. In terms of assembly, homodimer. Homohexamer; forms a hexameric ring structure with 6-fold symmetry characteristic of AAA+ ATPases. Interacts (via N-terminus) with host RTN3 (via reticulon domain); this interaction is important for viral replication. Interacts with capsid protein VP3; this interaction may be important for virion morphogenesis. As to quaternary structure, interacts with protein 3CD. In terms of assembly, homodimer. Interacts with host GBF1. Interacts (via GOLD domain) with host ACBD3 (via GOLD domain); this interaction allows the formation of a viral protein 3A/ACBD3 heterotetramer with a 2:2 stoichiometry, which will stimulate the recruitment of host PI4KB in order to synthesize PI4P at the viral RNA replication sites. Interacts with RNA-directed RNA polymerase. As to quaternary structure, interacts with protein 3AB and with RNA-directed RNA polymerase. In terms of assembly, interacts with Viral protein genome-linked and with protein 3CD. Mg(2+) is required as a cofactor. Specific enzymatic cleavages in vivo by the viral proteases yield processing intermediates and the mature proteins. In terms of processing, myristoylation is required for the formation of pentamers during virus assembly. Further assembly of 12 pentamers and a molecule of genomic RNA generates the provirion. Post-translationally, during virion maturation, immature virions are rendered infectious following cleavage of VP0 into VP4 and VP2. This maturation seems to be an autocatalytic event triggered by the presence of RNA in the capsid and it is followed by a conformational change infectious virion. Myristoylation is required during RNA encapsidation and formation of the mature virus particle. In terms of processing, VPg is uridylylated by the polymerase into VPg-pUpU. This acts as a nucleotide-peptide primer for the genomic RNA replication.

The protein resides in the virion. Its subcellular location is the host cytoplasm. It localises to the host cytoplasmic vesicle membrane. It is found in the host nucleus. The enzyme catalyses a ribonucleoside 5'-triphosphate + H2O = a ribonucleoside 5'-diphosphate + phosphate + H(+). The catalysed reaction is Selective cleavage of Tyr-|-Gly bond in the picornavirus polyprotein.. It carries out the reaction RNA(n) + a ribonucleoside 5'-triphosphate = RNA(n+1) + diphosphate. It catalyses the reaction Selective cleavage of Gln-|-Gly bond in the poliovirus polyprotein. In other picornavirus reactions Glu may be substituted for Gln, and Ser or Thr for Gly.. Its activity is regulated as follows. Replication or transcription is subject to high level of random mutations by the nucleotide analog ribavirin. In terms of biological role, forms an icosahedral capsid of pseudo T=3 symmetry with capsid proteins VP2 and VP3. The capsid is 300 Angstroms in diameter, composed of 60 copies of each capsid protein and enclosing the viral positive strand RNA genome. Capsid protein VP1 mainly forms the vertices of the capsid. Capsid protein VP1 interacts with host CXADR to provide virion attachment to target host cells. This attachment induces virion internalization. Tyrosine kinases are probably involved in the entry process. After binding to its receptor, the capsid undergoes conformational changes. Capsid protein VP1 N-terminus (that contains an amphipathic alpha-helix) and capsid protein VP4 are externalized. Together, they shape a pore in the host membrane through which viral genome is translocated to host cell cytoplasm. Functionally, forms an icosahedral capsid of pseudo T=3 symmetry with capsid proteins VP2 and VP3. The capsid is 300 Angstroms in diameter, composed of 60 copies of each capsid protein and enclosing the viral positive strand RNA genome. Its function is as follows. Lies on the inner surface of the capsid shell. After binding to the host receptor, the capsid undergoes conformational changes. Capsid protein VP4 is released, Capsid protein VP1 N-terminus is externalized, and together, they shape a pore in the host membrane through which the viral genome is translocated into the host cell cytoplasm. Component of immature procapsids, which is cleaved into capsid proteins VP4 and VP2 after maturation. Allows the capsid to remain inactive before the maturation step. In terms of biological role, cysteine protease that cleaves viral polyprotein and specific host proteins. It is responsible for the autocatalytic cleavage between the P1 and P2 regions, which is the first cleavage occurring in the polyprotein. Also cleaves the host translation initiation factor EIF4G1, in order to shut down the capped cellular mRNA translation. Inhibits the host nucleus-cytoplasm protein and RNA trafficking by cleaving host members of the nuclear pores. Counteracts stress granule formation probably by antagonizing its assembly or promoting its dissassembly. Cleaves and inhibits host IFIH1/MDA5, thereby inhibiting the type-I IFN production and the establishment of the antiviral state. Cleaves and inhibits host MAVS, thereby inhibiting the type-I IFN production and the establishment of the antiviral state. Functionally, plays an essential role in the virus replication cycle by acting as a viroporin. Creates a pore in the host endoplasmic reticulum and as a consequence releases Ca2+ in the cytoplasm of infected cell. In turn, high levels of cytoplasmic calcium may trigger membrane trafficking and transport of viral ER-associated proteins to viroplasms, sites of viral genome replication. Its function is as follows. Induces and associates with structural rearrangements of intracellular membranes. Displays RNA-binding, nucleotide binding and NTPase activities. May play a role in virion morphogenesis and viral RNA encapsidation by interacting with the capsid protein VP3. Localizes the viral replication complex to the surface of membranous vesicles. Together with protein 3CD binds the Cis-Active RNA Element (CRE) which is involved in RNA synthesis initiation. Acts as a cofactor to stimulate the activity of 3D polymerase, maybe through a nucleid acid chaperone activity. In terms of biological role, localizes the viral replication complex to the surface of membranous vesicles. It inhibits host cell endoplasmic reticulum-to-Golgi apparatus transport and causes the disassembly of the Golgi complex, possibly through GBF1 interaction. This would result in depletion of MHC, trail receptors and IFN receptors at the host cell surface. Plays an essential role in viral RNA replication by recruiting ACBD3 and PI4KB at the viral replication sites, thereby allowing the formation of the rearranged membranous structures where viral replication takes place. Functionally, acts as a primer for viral RNA replication and remains covalently bound to viral genomic RNA. VPg is uridylylated prior to priming replication into VPg-pUpU. The oriI viral genomic sequence may act as a template for this. The VPg-pUpU is then used as primer on the genomic RNA poly(A) by the RNA-dependent RNA polymerase to replicate the viral genome. During genome replication, the VPg-RNA linkage is removed by the host TDP2, thereby accelerating replication. During the late stage of the replication cycle, host TDP2 is excluded from sites of viral RNA synthesis and encapsidation, allowing for the generation of progeny virions. Its function is as follows. Involved in the viral replication complex and viral polypeptide maturation. It exhibits protease activity with a specificity and catalytic efficiency that is different from protease 3C. Protein 3CD lacks polymerase activity. Protein 3CD binds to the 5'UTR of the viral genome. Replicates the viral genomic RNA on the surface of intracellular membranes. May form linear arrays of subunits that propagate along a strong head-to-tail interaction called interface-I. Covalently attaches UMP to a tyrosine of VPg, which is used to prime RNA synthesis. The positive stranded RNA genome is first replicated at virus induced membranous vesicles, creating a dsRNA genomic replication form. This dsRNA is then used as template to synthesize positive stranded RNA genomes. ss(+)RNA genomes are either translated, replicated or encapsidated. In terms of biological role, major viral protease that mediates proteolytic processing of the polyprotein. Cleaves host EIF5B, contributing to host translation shutoff. Also cleaves host PABPC1, contributing to host translation shutoff. Cleaves host NLRP1, triggers host N-glycine-mediated degradation of the autoinhibitory NLRP1 N-terminal fragment. The sequence is that of Genome polyprotein from Coxsackievirus B4 (strain E2).